The sequence spans 259 residues: 1,2-dihydroxy-1,2-dihydronaphthalene dehydrogenase (259 aa).

Residue 8–32 (SITGAGSGIGLELVRSFKSAGYYVS) coordinates NAD(+). Ser-140 serves as a coordination point for substrate. The active-site Proton acceptor is Tyr-153.

It belongs to the short-chain dehydrogenases/reductases (SDR) family.

It carries out the reaction (1R,2S)-1,2-dihydronaphthalene-1,2-diol + NAD(+) = naphthalene-1,2-diol + NADH + H(+). The enzyme catalyses cis-1,2-dihydroxy-1,2-dihydrodibenzothiophene + NAD(+) = 1,2-dihydroxydibenzothiophene + NADH + H(+). It participates in aromatic compound metabolism; naphthalene degradation. Functionally, catalyzes the oxidation of naphthalene dihydrodiol into 1,2-dihydroxynaphthalene. The sequence is that of 1,2-dihydroxy-1,2-dihydronaphthalene dehydrogenase (doxE) from Pseudomonas sp. (strain C18).